Consider the following 1484-residue polypeptide: MQRSPLEKASVLSKLFFSWTRPILTKGYRQRLELSDIYQIPSADSADNLSEKLEREWDRELASKKNPKLINALRRCFFWRFMFYGIILYLGEVTKSVQPLLLGRIIASYDPDNKEERSIAIYLGIGLCLLFVMRTLLLHPAIFGLHRIGMQMRIAMFSLIYKKTLKLSSRVLDKISIGQLVSLLSNNLNKFDEGLALAHFVWIAPLQVTLLMGLLWDLLQASAFCGLAFLIVLALFQAGLGRMMMKYRDQRAGKINERLVITSEMIENIQSVKAYCWEEAMEKMIESIRQTELKLTRKAAYVRYFNSSAFFFSGFFVVFLSVLPYALIKTIVLRKIFTTISFCIVLRMAVTRQFPWAVQTWYDSLGAINKIQDFLQKQEYKTLEYNLTTTEVVMENVTAFWEEGFGELLEKAKQNSNDRKISNADNSLFFSNFSLLGAPVLKDISFKIERGQLLAVAGSTGAGKTSLLMMIMGELEPSEGKIKHSGRISFCSQFSWIMPGTIKENIIFGVSYDEYRYRSVIKACQLEEDISKFAEKDNIVLGEGGITLSGGQRARISLARAVYKDADLYLLDSPFGYLDVLTEKEIFESCVCKLMANKTRILVTSKMEHLKKADKILILHEGSCYFYGTFSELQNLRPDFSSKLMGYDSFDQFSAERRNSIITETLRRFSLEGDAPVSWNETKKQSFKQTGEFGEKRKNSILNPVNSIRKFSVVQKTPLQMNGIEEDSDEPLERRLSLVPDGAEQGEAILPRSNMINTGPTLQRQRRQSVLNLMTCSPGNQGQSFHGRTASSTRKMSLAPQANLTEMDIYSRRLSQDSGLEISEEINEEDLKECFIDDVESIPPVTTWNTYLRYVTIHKSLVFVLIWCLVIFLAEVAISLVVLWLLKKTASQDKGNSTQSINSSYTVIFTSTSTYYVFYIYVGVADTLLALGFFRGLPLVHTLITVSKILHHKMLHAVLQAPMSTLNALKAGGILNRFSKDIAILDDLLPLTIFDFVQLLLIVIGAVTVVSALQPYIFLATVPVIAAFIMLRAYFLHTSQQLKQLESEGRSPIFTHLVTSLKGLWTLRAFGRQPYFETLFHKALNLHTANWFLYLSTLRWFQMRMEIIFVIFFIAITFISILTTGEGVGAVGIILTLAMNIMGTLQWAVNSSIDVDSLMRSVSRVFKFIDMPAEESKPPTKSFKPSKDVQLSKVLITENHHVREDDIWPSGGQMTVKDLTAKYIDGGNAILENISFSISPGQRVGLLGRTGSGKSTLLSAFLRLLNTEGEIQIDGVSWDSITLQEWRKAFGVIPQKVFIFSGTFRKNLDPYGQWNDQEIWKVADEVGLRSVIEQFPGKLDFVLVDGGCVLSHGHKQLMCLARSVLSKAKILLLDEPSAHLDPITYQIIRRTLKQAFADCTVILSEHRIEAMLECQRFLVIEENKVRQYDSLQRLLSEKSLFRQAISPSDRLRFFPHRNSSKHKSRSQIAALKEETEEEVQETRL.

Residues 1–77 (MQRSPLEKAS…KLINALRRCF (77 aa)) are Cytoplasmic-facing. The helical transmembrane segment at 78–98 (FWRFMFYGIILYLGEVTKSVQ) threads the bilayer. The 285-residue stretch at 81–365 (FMFYGIILYL…WAVQTWYDSL (285 aa)) folds into the ABC transmembrane type-1 1 domain. Topologically, residues 99–122 (PLLLGRIIASYDPDNKEERSIAIY) are extracellular. The chain crosses the membrane as a helical span at residues 123-146 (LGIGLCLLFVMRTLLLHPAIFGLH). At 147-195 (RIGMQMRIAMFSLIYKKTLKLSSRVLDKISIGQLVSLLSNNLNKFDEGL) the chain is on the cytoplasmic side. A helical transmembrane segment spans residues 196–216 (ALAHFVWIAPLQVTLLMGLLW). Topologically, residues 217 to 222 (DLLQAS) are extracellular. Residues 223–243 (AFCGLAFLIVLALFQAGLGRM) form a helical membrane-spanning segment. The Cytoplasmic segment spans residues 244-298 (MMKYRDQRAGKINERLVITSEMIENIQSVKAYCWEEAMEKMIESIRQTELKLTRK). Residues 299–319 (AAYVRYFNSSAFFFSGFFVVF) traverse the membrane as a helical segment. Residues 320-339 (LSVLPYALIKTIVLRKIFTT) lie on the Extracellular side of the membrane. Residues 340 to 358 (ISFCIVLRMAVTRQFPWAV) form a helical membrane-spanning segment. Topologically, residues 359 to 860 (QTWYDSLGAI…YLRYVTIHKS (502 aa)) are cytoplasmic. ATP-binding positions include Trp401, Ser434, 458–465 (GSTGAGKT), and Gln493. Positions 423 to 646 (NADNSLFFSN…RPDFSSKLMG (224 aa)) constitute an ABC transporter 1 domain. A lipid anchor (S-palmitoyl cysteine) is attached at Cys524. Residues Ser549 and Ser660 each carry the phosphoserine modification. The segment at 654-833 (SAERRNSIIT…EEINEEDLKE (180 aa)) is disordered R region. Ser670 carries the phosphoserine; by PKA modification. A Phosphoserine modification is found at Ser686. Lys688 participates in a covalent cross-link: Glycyl lysine isopeptide (Lys-Gly) (interchain with G-Cter in ubiquitin). Phosphoserine occurs at positions 700 and 712. A Phosphothreonine modification is found at Thr717. Phosphoserine is present on residues Ser737, Ser769, Ser792, Ser797, and Ser815. The helical transmembrane segment at 861–881 (LVFVLIWCLVIFLAEVAISLV) threads the bilayer. The ABC transmembrane type-1 2 domain maps to 861–1157 (LVFVLIWCLV…AVNSSIDVDS (297 aa)). The Extracellular segment spans residues 882–920 (VLWLLKKTASQDKGNSTQSINSSYTVIFTSTSTYYVFYI). Residues Asn896 and Asn902 are each glycosylated (N-linked (GlcNAc...) asparagine). The chain crosses the membrane as a discontinuously helical span at residues 921–941 (YVGVADTLLALGFFRGLPLVH). Topologically, residues 942 to 992 (TLITVSKILHHKMLHAVLQAPMSTLNALKAGGILNRFSKDIAILDDLLPLT) are cytoplasmic. The helical transmembrane segment at 993-1013 (IFDFVQLLLIVIGAVTVVSAL) threads the bilayer. Residues 1014–1015 (QP) lie on the Extracellular side of the membrane. Residues 1016 to 1036 (YIFLATVPVIAAFIMLRAYFL) form a helical membrane-spanning segment. The Cytoplasmic portion of the chain corresponds to 1037–1097 (HTSQQLKQLE…TANWFLYLST (61 aa)). The helical transmembrane segment at 1098 to 1118 (LRWFQMRMEIIFVIFFIAITF) threads the bilayer. Residues 1119 to 1132 (ISILTTGEGVGAVG) are Extracellular-facing. Residues 1133-1153 (IILTLAMNIMGTLQWAVNSSI) traverse the membrane as a helical segment. The Cytoplasmic segment spans residues 1154 to 1484 (DVDSLMRSVS…TEEEVQETRL (331 aa)). An ABC transporter 2 domain is found at 1214 to 1447 (MTVKDLTAKY…KSLFRQAISP (234 aa)). ATP-binding positions include Tyr1223 and 1248-1255 (GRTGSGKS). An interaction with GORASP2 region spans residues 1390 to 1484 (RTLKQAFADC…TEEEVQETRL (95 aa)). A lipid anchor (S-palmitoyl cysteine) is attached at Cys1399. Residues Ser1448 and Ser1460 each carry the phosphoserine modification. Positions 1456–1465 (HRNSSKHKSR) are enriched in basic residues. Residues 1456–1484 (HRNSSKHKSRSQIAALKEETEEEVQETRL) form a disordered region. Residues 1474-1484 (ETEEEVQETRL) show a composition bias toward acidic residues. Residues 1482–1484 (TRL) carry the PDZ-binding motif.

It belongs to the ABC transporter superfamily. ABCC family. CFTR transporter (TC 3.A.1.202) subfamily. As to quaternary structure, monomer; does not require oligomerization for channel activity. May form oligomers in the membrane. Interacts with SLC26A3, SLC26A6 and NHERF1. Interacts with SHANK2. Interacts with MYO6. Interacts (via C-terminus) with GOPC (via PDZ domain); this promotes CFTR internalization and thereby decreases channel activity. Interacts with SLC4A7 through NHERF1. Found in a complex with MYO5B and RAB11A. Interacts with ANO1. Interacts with SLC26A8. Interacts with AHCYL1; the interaction increases CFTR activity. Interacts with CSE1L. The core-glycosylated form interacts with GORASP2 (via PDZ GRASP-type 1 domain) in respone to ER stress. Interacts with MARCHF2; the interaction leads to CFTR ubiqtuitination and degradation. Interacts with ADGRG2. Post-translationally, N-glycosylated. In terms of processing, phosphorylated; cAMP treatment promotes phosphorylation and activates the channel. Dephosphorylation decreases the ATPase activity (in vitro). Phosphorylation at PKA sites activates the channel. Phosphorylation at PKC sites enhances the response to phosphorylation by PKA. Phosphorylated by AMPK; this inhibits channel activity. Ubiquitinated, leading to its degradation in the lysosome. Deubiquitination by USP10 in early endosomes enhances its endocytic recycling to the cell membrane. Ubiquitinated by RNF185 during ER stress. Ubiquitinated by MARCHF2.

It is found in the apical cell membrane. It localises to the early endosome membrane. The protein resides in the cell membrane. The protein localises to the recycling endosome membrane. Its subcellular location is the endoplasmic reticulum membrane. It is found in the nucleus. It carries out the reaction ATP + H2O + closed Cl(-) channel = ADP + phosphate + open Cl(-) channel.. The enzyme catalyses chloride(in) = chloride(out). The catalysed reaction is hydrogencarbonate(in) = hydrogencarbonate(out). It catalyses the reaction ATP + H2O = ADP + phosphate + H(+). In terms of biological role, epithelial ion channel that plays an important role in the regulation of epithelial ion and water transport and fluid homeostasis. Mediates the transport of chloride ions across the cell membrane. Possesses an intrinsic ATPase activity and utilizes ATP to gate its channel; the passive flow of anions through the channel is gated by cycles of ATP binding and hydrolysis by the ATP-binding domains. The ion channel is also permeable to HCO(3)(-); selectivity depends on the extracellular chloride concentration. Exerts its function also by modulating the activity of other ion channels and transporters. Contributes to the regulation of the pH and the ion content of the epithelial fluid layer. Modulates the activity of the epithelial sodium channel (ENaC) complex, in part by regulating the cell surface expression of the ENaC complex. May regulate bicarbonate secretion and salvage in epithelial cells by regulating the transporter SLC4A7. Can inhibit the chloride channel activity of ANO1. Plays a role in the chloride and bicarbonate homeostasis during sperm epididymal maturation and capacitation. This is Cystic fibrosis transmembrane conductance regulator from Mustela putorius furo (European domestic ferret).